Consider the following 276-residue polypeptide: Large ribosomal subunit protein uL2 (276 aa).

Disordered stretches follow at residues 35–58 and 218–276; these read RKLS…GGGH and RPIT…KNRK. Residues 255-276 show a composition bias toward basic residues; the sequence is RRPKKASNKMIVRRRPNGKNRK.

It belongs to the universal ribosomal protein uL2 family. As to quaternary structure, part of the 50S ribosomal subunit. Forms a bridge to the 30S subunit in the 70S ribosome.

Its function is as follows. One of the primary rRNA binding proteins. Required for association of the 30S and 50S subunits to form the 70S ribosome, for tRNA binding and peptide bond formation. It has been suggested to have peptidyltransferase activity; this is somewhat controversial. Makes several contacts with the 16S rRNA in the 70S ribosome. This chain is Large ribosomal subunit protein uL2, found in Bifidobacterium adolescentis (strain ATCC 15703 / DSM 20083 / NCTC 11814 / E194a).